The chain runs to 485 residues: Proline--tRNA ligase (485 aa).

This sequence belongs to the class-II aminoacyl-tRNA synthetase family. ProS type 3 subfamily. In terms of assembly, homodimer.

The protein localises to the cytoplasm. The enzyme catalyses tRNA(Pro) + L-proline + ATP = L-prolyl-tRNA(Pro) + AMP + diphosphate. Catalyzes the attachment of proline to tRNA(Pro) in a two-step reaction: proline is first activated by ATP to form Pro-AMP and then transferred to the acceptor end of tRNA(Pro). The polypeptide is Proline--tRNA ligase (Aeropyrum pernix (strain ATCC 700893 / DSM 11879 / JCM 9820 / NBRC 100138 / K1)).